We begin with the raw amino-acid sequence, 861 residues long: Protein argonaute-3 (861 aa).

Met1 bears the N-acetylmethionine mark. One can recognise a PAZ domain in the interval 230 to 349; sequence PVIQFMCEVL…LPLEVCNIVA (120 aa). Residues 518–820 enclose the Piwi domain; sequence LIIVILPGKT…VAFRARYHLV (303 aa). The interval 530–567 is interaction with guide RNA; it reads YAEVKRVGDTLLGMATQCVQVKNVIKTSPQTLSNLCLK. 3 residues coordinate a divalent metal cation: Asp598, Glu638, and Asp670. The interval 758 to 806 is interaction with guide RNA; sequence QGTSRPSHYHVLWDDNCFTADELQLLTYQPSAHTYVHCTRSVSIPAPAY. His809 is a binding site for a divalent metal cation. Residues 824–847 form a disordered region; the sequence is RDSAEGSHVSGQSNGRDPQALAKA. Position 826 is a phosphoserine (Ser826).

This sequence belongs to the argonaute family. Ago subfamily. In terms of assembly, interacts with EIF4B, IMP8, PRMT5 and TNRC6B. Interacts with APOBEC3F, APOBEC3G and APOBEC3H. Interacts with EDC4. In terms of processing, ubiquitinated on surface-exposed lysines by a SCF-like E3 ubiquitin-protein ligase complex containing ZSWIM8 during target-directed microRNA degradation (TDMD), a process that mediates degradation of microRNAs (miRNAs). Ubiquitination by the SCF-like E3 ubiquitin-protein ligase complex containing ZSWIM8 leads to its subsequent degradation, thereby exposing miRNAs for degradation. ZSWIM8 recognizes and binds AGO3 when it is engaged with a TDMD target.

The protein localises to the cytoplasm. It localises to the P-body. The enzyme catalyses Endonucleolytic cleavage to 5'-phosphomonoester.. In terms of biological role, required for RNA-mediated gene silencing (RNAi). Binds to short RNAs such as microRNAs (miRNAs) and represses the translation of mRNAs which are complementary to them. Proposed to be involved in stabilization of small RNA derivates (siRNA) derived from processed RNA polymerase III-transcribed Alu repeats containing a DR2 retinoic acid response element (RARE) in stem cells and in the subsequent siRNA-dependent degradation of a subset of RNA polymerase II-transcribed coding mRNAs by recruiting a mRNA decapping complex involving EDC4. Possesses RNA slicer activity but only on select RNAs bearing 5'- and 3'-flanking sequences to the region of guide-target complementarity. The sequence is that of Protein argonaute-3 (AGO3) from Bos taurus (Bovine).